The sequence spans 255 residues: Putative ankyrin repeat protein R880 (255 aa).

ANK repeat units follow at residues 79 to 109, 110 to 139, 141 to 169, 171 to 199, and 201 to 229; these read SGINNYLLTACKYGHCKLVKYFVECGADIHY, KTDYALQLACKYGYLEIVKYLVKKGANINT, DCYAVQLASREGHLKIVKYLVELGTNVRK, RDLAFRWSVENNHLSVTKYLVELGSDVRS, and KNYAIKKSCEYGYFEMTQYLMNQGANFRV.

This chain is Putative ankyrin repeat protein R880, found in Acanthamoeba polyphaga (Amoeba).